A 189-amino-acid chain; its full sequence is uncharacterized protein (189 aa).

The protein belongs to the inositol monophosphatase superfamily.

This is an uncharacterized protein from Leptospira biflexa.